Reading from the N-terminus, the 196-residue chain is Imidazoleglycerol-phosphate dehydratase (196 aa).

It belongs to the imidazoleglycerol-phosphate dehydratase family.

It localises to the cytoplasm. The catalysed reaction is D-erythro-1-(imidazol-4-yl)glycerol 3-phosphate = 3-(imidazol-4-yl)-2-oxopropyl phosphate + H2O. The protein operates within amino-acid biosynthesis; L-histidine biosynthesis; L-histidine from 5-phospho-alpha-D-ribose 1-diphosphate: step 6/9. This Chlorobium chlorochromatii (strain CaD3) protein is Imidazoleglycerol-phosphate dehydratase.